A 449-amino-acid chain; its full sequence is Capsid protein (449 aa).

The interval methionine 1–arginine 43 is DNA-binding. Residues arginine 6–lysine 47 are nuclear localization signals.

Belongs to the gyrovirus capsid protein family. In terms of assembly, homomultimer (Potential). Interacts with Rep; this interaction relocates Rep into the nucleus.

The protein resides in the host nucleus. It localises to the virion. Functionally, self-assembles to form the virion icosahedral capsid with a T=1 symmetry. This very small capsid (25 nm in diameter) allows the virus to be very stable in the environment and resistant to some disinfectants, including detergents. Essential for the initial attachment to host receptors. After attachment, the virus is endocytosed and traffics to the nucleus. The capsid protein binds and transports the viral genome and Rep across the nuclear envelope. This is Capsid protein (VP1) from Chicken anemia virus (isolate Australia) (CAV).